A 241-amino-acid polypeptide reads, in one-letter code: Probable transcriptional regulatory protein Reut_A2522 (241 aa).

It belongs to the TACO1 family.

Its subcellular location is the cytoplasm. This is Probable transcriptional regulatory protein Reut_A2522 from Cupriavidus pinatubonensis (strain JMP 134 / LMG 1197) (Cupriavidus necator (strain JMP 134)).